We begin with the raw amino-acid sequence, 192 residues long: Ribosomal RNA small subunit methyltransferase G (192 aa).

S-adenosyl-L-methionine contacts are provided by residues Gly-63, Leu-68, 112 to 113, and Arg-125; that span reads IE.

This sequence belongs to the methyltransferase superfamily. RNA methyltransferase RsmG family.

The protein resides in the cytoplasm. The enzyme catalyses guanosine(527) in 16S rRNA + S-adenosyl-L-methionine = N(7)-methylguanosine(527) in 16S rRNA + S-adenosyl-L-homocysteine. Functionally, specifically methylates the N7 position of guanine in position 527 of 16S rRNA. In Rickettsia rickettsii (strain Iowa), this protein is Ribosomal RNA small subunit methyltransferase G.